We begin with the raw amino-acid sequence, 59 residues long: U-reduvitoxin-Pr6a (59 aa).

The signal sequence occupies residues 1-19 (MKVFLLTILLCFLIAYCAG). Intrachain disulfides connect C31–C46, C38–C51, and C45–C58.

It belongs to the venom Ptu1-like knottin family. In terms of tissue distribution, expressed by the venom gland.

Its subcellular location is the secreted. In terms of biological role, binds reversibly and blocks P/Q-type voltage-gated calcium channels (Cav). The sequence is that of U-reduvitoxin-Pr6a from Platymeris rhadamanthus (Red spot assassin bug).